Consider the following 146-residue polypeptide: MRLMGMDVGSRTVGISVSDQLGWTAQGVEIVPINEDEEIFGIERVKELVKEYDVVGFVLGLPKNMNNTEGPRVEAARNYGKLLEETFGLPIDFQDERLTTVEAERMLIEQADTSRSKRKKVIDKLAASLILENYLNGHGKLIDRLK.

The protein belongs to the YqgF nuclease family.

The protein resides in the cytoplasm. Could be a nuclease involved in processing of the 5'-end of pre-16S rRNA. The chain is Putative pre-16S rRNA nuclease from Pediococcus pentosaceus (strain ATCC 25745 / CCUG 21536 / LMG 10740 / 183-1w).